The following is a 356-amino-acid chain: Cysteine protease XCP2 (356 aa).

Positions 1–26 (MALSSPSRILCFALALSAASLSLSFA) are cleaved as a signal peptide. Positions 27-137 (SSHDYSIVGY…AEFAYRDVEA (111 aa)) are cleaved as a propeptide — activation peptide. 3 disulfides stabilise this stretch: cysteine 159–cysteine 201, cysteine 193–cysteine 234, and cysteine 292–cysteine 343. Residue cysteine 162 is part of the active site. An N-linked (GlcNAc...) asparagine glycan is attached at asparagine 181. Active-site residues include histidine 298 and asparagine 318.

It belongs to the peptidase C1 family. Interacts with PRN2. In terms of tissue distribution, mostly expressed in roots, stems and flowers. Confined to tracheary elements, and specifically to xylem.

The protein localises to the vacuole. It localises to the cell membrane. Its function is as follows. Cysteine protease involved in xylem tracheary element (TE) autolysis during xylogenesis in roots. Participates in micro autolysis within the intact central vacuole before mega autolysis is initiated by tonoplast implosion. Involved in susceptibility to the bacterial plant pathogen Ralstonia solanacearum. This chain is Cysteine protease XCP2, found in Arabidopsis thaliana (Mouse-ear cress).